We begin with the raw amino-acid sequence, 239 residues long: Derlin-2 (239 aa).

Residues 1 to 56 (MAYQSLRLEYLQIPPVSRAYTTACVLTTAAVQLELITPFQLYFNPELIFKHFQIWR) are Cytoplasmic-facing. Residues 57–77 (LITNFLFFGPVGFNFLFNMIF) traverse the membrane as a helical segment. Over 78 to 98 (LYRYCRMLEEGSFRGRTADFV) the chain is Lumenal. The chain crosses the membrane as a helical span at residues 99–119 (FMFLFGGFLMTLFGLFVSLVF). Topologically, residues 120-150 (LGQAFTIMLVYVWSRRNPYVRMNFFGLLNFQ) are cytoplasmic. The chain crosses the membrane as a helical span at residues 151 to 171 (APFLPWVLMGFSLLLGNSIIV). D172 is a topological domain (lumenal). A helical transmembrane segment spans residues 173–193 (LLGIAVGHIYFFLEDVFPNQP). At 194–239 (GGIRILKTPSILKAIFDTPDEDPNYNPLPEERPGGFAWGEGQRLGG) the chain is on the cytoplasmic side. The tract at residues 215 to 239 (DPNYNPLPEERPGGFAWGEGQRLGG) is disordered. A compositionally biased stretch (gly residues) spans 229 to 239 (FAWGEGQRLGG).

It belongs to the derlin family. As to quaternary structure, forms homo- and heterooligomers with DERL3 and, to a lesser extent, with DERL1. Interacts with the SEL1L/SYVN1 and VCP/SELENOS protein complexes. Mediates association between VCP and EDEM1, as well as that between VCP and the misfolded glycoproteins. Interacts with OS9. Interacts with SELENOK and SELENOS. Interacts with the signal recognition particle/SRP and the SRP receptor; in the process of endoplasmic reticulum stress-induced pre-emptive quality control. Interacts with CCDC47.

The protein resides in the endoplasmic reticulum membrane. Its function is as follows. Functional component of endoplasmic reticulum-associated degradation (ERAD) for misfolded lumenal glycoproteins, but not that of misfolded nonglycoproteins. May act by forming a channel that allows the retrotranslocation of misfolded glycoproteins into the cytosol where they are ubiquitinated and degraded by the proteasome. May mediate the interaction between VCP and misfolded glycoproteins. May also be involved in endoplasmic reticulum stress-induced pre-emptive quality control, a mechanism that selectively attenuates the translocation of newly synthesized proteins into the endoplasmic reticulum and reroutes them to the cytosol for proteasomal degradation. This chain is Derlin-2, found in Pongo abelii (Sumatran orangutan).